The following is a 219-amino-acid chain: Elongation factor Ts (219 aa).

The tract at residues 82-85 (TDFV) is involved in Mg(2+) ion dislocation from EF-Tu.

It belongs to the EF-Ts family.

The protein resides in the cytoplasm. Associates with the EF-Tu.GDP complex and induces the exchange of GDP to GTP. It remains bound to the aminoacyl-tRNA.EF-Tu.GTP complex up to the GTP hydrolysis stage on the ribosome. This is Elongation factor Ts from Synechococcus sp. (strain CC9902).